We begin with the raw amino-acid sequence, 266 residues long: Very-long-chain aldehyde decarbonylase GL1-11 (266 aa).

Transmembrane regions (helical) follow at residues 25–45 (VVTF…SLLF), 74–94 (ILYH…AFKF), 106–126 (WTVI…IFYW), and 163–183 (ILFL…HLFT). The 136-residue stretch at 113–248 (VLFYFVLEDF…FVYMDWLFGT (136 aa)) folds into the Fatty acid hydroxylase domain.

Belongs to the sterol desaturase family. As to quaternary structure, homodimer.

The protein localises to the endoplasmic reticulum membrane. The catalysed reaction is a long-chain fatty aldehyde + 2 NADPH + O2 + H(+) = a long-chain alkane + formate + 2 NADP(+) + H2O. In terms of biological role, aldehyde decarbonylase involved in the conversion of aldehydes to alkanes. Core component of a very-long-chain alkane synthesis complex. The polypeptide is Very-long-chain aldehyde decarbonylase GL1-11 (Oryza sativa subsp. indica (Rice)).